Consider the following 881-residue polypeptide: Ribonucleoside-diphosphate reductase large subunit (881 aa).

The ATP-cone domain maps to threonine 69–aspartate 160. Residues threonine 271, serine 286 to cysteine 287, glycine 315, asparagine 493 to glutamate 497, and proline 675 to threonine 679 each bind substrate. Residues cysteine 287 and cysteine 510 are joined by a disulfide bond. The active-site Proton acceptor is the asparagine 493. Residue cysteine 495 is the Cysteine radical intermediate of the active site. Glutamate 497 serves as the catalytic Proton acceptor.

This sequence belongs to the ribonucleoside diphosphate reductase large chain family. As to quaternary structure, heterotetramer composed of a homodimer of the large subunit (R1) and a homodimer of the small subunit (R2). Larger multisubunit protein complex are also active, composed of (R1)n(R2)n.

The enzyme catalyses a 2'-deoxyribonucleoside 5'-diphosphate + [thioredoxin]-disulfide + H2O = a ribonucleoside 5'-diphosphate + [thioredoxin]-dithiol. Under complex allosteric control mediated by deoxynucleoside triphosphates and ATP binding. The type of nucleotide bound at the specificity site determines substrate preference. It seems probable that ATP makes the enzyme reduce CDP and UDP, dGTP favors ADP reduction and dTTP favors GDP reduction. Functionally, ribonucleoside-diphosphate reductase holoenzyme provides the precursors necessary for viral DNA synthesis. Allows virus growth in non-dividing cells. Catalyzes the biosynthesis of deoxyribonucleotides from the corresponding ribonucleotides. The polypeptide is Ribonucleoside-diphosphate reductase large subunit (RNR1) (Acanthamoeba polyphaga mimivirus (APMV)).